The chain runs to 90 residues: UPF0223 protein SH1855 (90 aa).

The protein belongs to the UPF0223 family.

In Staphylococcus haemolyticus (strain JCSC1435), this protein is UPF0223 protein SH1855.